The primary structure comprises 304 residues: Glutaminase (304 aa).

Substrate-binding residues include S63, N114, E158, N165, Y189, Y240, and V258.

This sequence belongs to the glutaminase family. As to quaternary structure, homotetramer.

The enzyme catalyses L-glutamine + H2O = L-glutamate + NH4(+). This Shewanella loihica (strain ATCC BAA-1088 / PV-4) protein is Glutaminase.